The chain runs to 290 residues: Glycine--tRNA ligase alpha subunit (290 aa).

This sequence belongs to the class-II aminoacyl-tRNA synthetase family. In terms of assembly, tetramer of two alpha and two beta subunits.

Its subcellular location is the cytoplasm. It catalyses the reaction tRNA(Gly) + glycine + ATP = glycyl-tRNA(Gly) + AMP + diphosphate. In Desulfotalea psychrophila (strain LSv54 / DSM 12343), this protein is Glycine--tRNA ligase alpha subunit.